We begin with the raw amino-acid sequence, 242 residues long: 2-amino-5-formylamino-6-ribosylaminopyrimidin-4(3H)-one 5'-monophosphate deformylase (242 aa).

Fe cation-binding residues include glutamate 46, histidine 48, aspartate 57, and histidine 125.

Belongs to the creatininase superfamily. FAPy deformylase family. In terms of assembly, homodimer. It depends on Fe(2+) as a cofactor. Requires Zn(2+) as cofactor.

The catalysed reaction is 2-amino-5-formylamino-6-(5-phospho-D-ribosylamino)pyrimidin-4(3H)-one + H2O = 2,5-diamino-6-(1-D-ribosylamino)pyrimidin-4(3H)-one 5'-phosphate + formate + H(+). It functions in the pathway cofactor biosynthesis; coenzyme F420 biosynthesis. It participates in cofactor biosynthesis; riboflavin biosynthesis. In terms of biological role, catalyzes the hydrolysis of the formamide of 2-amino-5-formylamino-6-ribosylamino-4(3H)-pyrimidinone 5'-monophosphate (FAPy) to form 2,5-diamino-6-ribosylamino-4(3H)-pyrimidinone 5'-phosphate (APy). The polypeptide is 2-amino-5-formylamino-6-ribosylaminopyrimidin-4(3H)-one 5'-monophosphate deformylase (Methanococcus aeolicus (strain ATCC BAA-1280 / DSM 17508 / OCM 812 / Nankai-3)).